Reading from the N-terminus, the 398-residue chain is Gastric triacylglycerol lipase (398 aa).

Positions 1–19 (MWLLLTMASLISVLGTTHG) are cleaved as a signal peptide. Asn34 and Asn99 each carry an N-linked (GlcNAc...) asparagine glycan. The region spanning 78-377 (PVVFLQHGLL…PFYNHLDFIW (300 aa)) is the AB hydrolase-1 domain. Catalysis depends on Ser172, which acts as the Nucleophile. Residues Cys246 and Cys255 are joined by a disulfide bond. N-linked (GlcNAc...) asparagine glycosylation is found at Asn271 and Asn327. Active-site charge relay system residues include Asp343 and His372.

Belongs to the AB hydrolase superfamily. Lipase family.

It localises to the secreted. The catalysed reaction is a triacylglycerol + H2O = a diacylglycerol + a fatty acid + H(+). It catalyses the reaction 1,2,3-tri-(9Z-octadecenoyl)-glycerol + H2O = 1,2-di-(9Z-octadecenoyl)-sn-glycerol + (9Z)-octadecenoate + H(+). It carries out the reaction 1,2,3-trioctanoylglycerol + H2O = 1,2-dioctanoyl-sn-glycerol + octanoate + H(+). Its function is as follows. Catalyzes the hydrolysis of triacylglycerols to yield free fatty acids, diacylglycerol, monoacylglycerol, and glycerol. Shows a preferential hydrolysis at the sn-3 position of triacylglycerol. The chain is Gastric triacylglycerol lipase (LIPF) from Homo sapiens (Human).